Reading from the N-terminus, the 647-residue chain is Chaperone protein DnaK (647 aa).

Thr198 is subject to Phosphothreonine; by autocatalysis. The tract at residues 603–647 is disordered; sequence EQAQGAGGAQGFDPNAFQGGDAGQQQKADDGVVDAEFTEVKDDKK. Low complexity predominate over residues 618–628; that stretch reads AFQGGDAGQQQ.

Belongs to the heat shock protein 70 family.

Acts as a chaperone. The protein is Chaperone protein DnaK of Acinetobacter baylyi (strain ATCC 33305 / BD413 / ADP1).